The following is a 513-amino-acid chain: Abl interactor 2 (513 aa).

Serine 40 carries the phosphoserine modification. Residues 45 to 107 form the t-SNARE coiled-coil homology domain; it reads RALEETKAYT…DIHKEKVARR (63 aa). The segment at 167–431 is disordered; that stretch reads KMGGLPRTTP…PPEDYEEEEA (265 aa). The span at 174 to 185 shows a compositional bias: pro residues; it reads TTPPTQKPPSPP. A phosphoserine mark is found at serine 183 and serine 227. Polar residues predominate over residues 217–241; sequence PTRNMAPSQQSPVRTASVNQRNRTY. Residues 242 to 272 are compositionally biased toward low complexity; that stretch reads SSSGSSGGSHPSSRSSSRENSGSGSVGVPIA. The span at 273 to 282 shows a compositional bias: pro residues; that stretch reads VPTPSPPSVF. Positions 283 to 325 are enriched in low complexity; that stretch reads PAPAGSAGTPPLPATSASAPAPLVPATVPSSTAPNAAAGGAPN. A Phosphothreonine modification is found at threonine 361. Serine 368 is modified (phosphoserine). Over residues 376–399 the composition is skewed to polar residues; the sequence is SITSQTSLQNQMNGGPFYSQNPVS. Positions 400–409 are enriched in pro residues; that stretch reads DTPPPPPPVE. The region spanning 451–510 is the SH3 domain; it reads SYLEKVVAIYDYTKDKEDELSFQEGAIIYVIKKNDDGWYEGVMNGVTGLFPGNYVESIMH.

The protein belongs to the ABI family. Component of the WAVE complex composed of ABI2, CYFIP1 or CYFIP2, BRK1, NCKAP1 and WASF1/WAVE1. Within the complex, a heterodimer containing NCKAP1 and CYFIP1 interacts with a heterotrimer formed by WAVE1, ABI2 and BRK1. CYFIP2 binds to activated RAC1 which causes the complex to dissociate, releasing activated WASF1. Interacts (via SH3 domain) with ABL1 and ABL2. As to quaternary structure, (Microbial infection) Interacts with human cytomegalovirus UL135. In terms of processing, phosphorylated by ABL1. As to expression, widely expressed. Abundant in testes, ovary, thymus, and colon, with lower but detectable levels in prostate, peripheral blood leukocytes, and spleen.

The protein resides in the cytoplasm. The protein localises to the nucleus. Its subcellular location is the cell projection. It localises to the lamellipodium. It is found in the filopodium. The protein resides in the cytoskeleton. The protein localises to the cell junction. Its subcellular location is the adherens junction. Regulator of actin cytoskeleton dynamics underlying cell motility and adhesion. Functions as a component of the WAVE complex, which activates actin nucleating machinery Arp2/3 to drive lamellipodia formation. Acts as a regulator and substrate of nonreceptor tyrosine kinases ABL1 and ABL2 involved in processes linked to cell growth and differentiation. Positively regulates ABL1-mediated phosphorylation of ENAH, which is required for proper polymerization of nucleated actin filaments at the leading edge. Contributes to the regulation of actin assembly at the tips of neuron projections. In particular, controls dendritic spine morphogenesis and may promote dendritic spine specification toward large mushroom-type spines known as repositories of memory in the brain. In hippocampal neurons, may mediate actin-dependent BDNF-NTRK2 early endocytic trafficking that triggers dendrite outgrowth. Participates in ocular lens morphogenesis, likely by regulating lamellipodia-driven adherens junction formation at the epithelial cell-secondary lens fiber interface. Also required for nascent adherens junction assembly in epithelial cells. In Homo sapiens (Human), this protein is Abl interactor 2.